The chain runs to 161 residues: Protein PLASTID TRANSCRIPTIONALLY ACTIVE 7 (161 aa).

Residues 1–32 (MASFTCSSPSSILPIIDTRSGNLRCTFQSQVS) constitute a chloroplast transit peptide.

As to quaternary structure, component of the transcriptionally active chromosome (TAC) complexes. Interacts with FLN1, PTAC10, PTAC12/HMR/PAP5 and PTAC14. Binds to SL1/MTERF3. In terms of tissue distribution, mostly expressed in leaves, flowers and seedlings, and, to a lower extent, in roots and stems.

The protein localises to the plastid. Its subcellular location is the chloroplast. Essential for chloroplast development, especially for thylakoid formation. Involved in plastid gene expression, probably by maintaining plastid-encoded RNA polymerase (PEP) activity. This chain is Protein PLASTID TRANSCRIPTIONALLY ACTIVE 7, found in Arabidopsis thaliana (Mouse-ear cress).